A 243-amino-acid polypeptide reads, in one-letter code: Small ribosomal subunit protein uS3 (243 aa).

The region spanning 39–107 (MRKFVMSELK…ETHLNIVEVR (69 aa)) is the KH type-2 domain. The interval 214–243 (ASERRAMEGDAQGPASRDRDRDRDRRRDNA) is disordered. Basic and acidic residues predominate over residues 229–243 (SRDRDRDRDRRRDNA).

The protein belongs to the universal ribosomal protein uS3 family. Part of the 30S ribosomal subunit. Forms a tight complex with proteins S10 and S14.

Its function is as follows. Binds the lower part of the 30S subunit head. Binds mRNA in the 70S ribosome, positioning it for translation. In Rhizobium johnstonii (strain DSM 114642 / LMG 32736 / 3841) (Rhizobium leguminosarum bv. viciae), this protein is Small ribosomal subunit protein uS3.